A 603-amino-acid polypeptide reads, in one-letter code: Elongation factor 4 (603 aa).

Residues 7–191 form the tr-type G domain; sequence SNIRNFSIVA…AIVTRLPPPK (185 aa). Residues 19–24 and 138–141 each bind GTP; these read DHGKST and NKVD.

Belongs to the TRAFAC class translation factor GTPase superfamily. Classic translation factor GTPase family. LepA subfamily.

It is found in the cell inner membrane. It carries out the reaction GTP + H2O = GDP + phosphate + H(+). Its function is as follows. Required for accurate and efficient protein synthesis under certain stress conditions. May act as a fidelity factor of the translation reaction, by catalyzing a one-codon backward translocation of tRNAs on improperly translocated ribosomes. Back-translocation proceeds from a post-translocation (POST) complex to a pre-translocation (PRE) complex, thus giving elongation factor G a second chance to translocate the tRNAs correctly. Binds to ribosomes in a GTP-dependent manner. This is Elongation factor 4 from Bradyrhizobium diazoefficiens (strain JCM 10833 / BCRC 13528 / IAM 13628 / NBRC 14792 / USDA 110).